The sequence spans 141 residues: Hemoglobin subunit alpha (141 aa).

Residues V1–R141 enclose the Globin domain. S3 is subject to Phosphoserine. An N6-succinyllysine mark is found at K7 and K11. K16 carries the post-translational modification N6-acetyllysine; alternate. K16 is subject to N6-succinyllysine; alternate. Y24 is subject to Phosphotyrosine. Position 40 is an N6-succinyllysine (K40). Residue S49 is modified to Phosphoserine. H58 serves as a coordination point for O2. H87 lines the heme b pocket. S102 is modified (phosphoserine). T108 carries the post-translational modification Phosphothreonine. S124 bears the Phosphoserine mark. 2 positions are modified to phosphothreonine: T134 and T137. Position 138 is a phosphoserine (S138).

It belongs to the globin family. Heterotetramer of two alpha chains and two beta chains. As to expression, red blood cells.

In terms of biological role, involved in oxygen transport from the lung to the various peripheral tissues. Functionally, hemopressin acts as an antagonist peptide of the cannabinoid receptor CNR1. Hemopressin-binding efficiently blocks cannabinoid receptor CNR1 and subsequent signaling. The sequence is that of Hemoglobin subunit alpha (HBA) from Lama glama (Llama).